Here is a 340-residue protein sequence, read N- to C-terminus: Glycerol-3-phosphate dehydrogenase [NAD(P)+] (340 aa).

Residues S14, F15, R35, and K108 each contribute to the NADPH site. Sn-glycerol 3-phosphate-binding residues include K108 and G136. A140 lines the NADPH pocket. Sn-glycerol 3-phosphate-binding residues include K191, D244, S254, R255, and N256. K191 serves as the catalytic Proton acceptor. R255 is an NADPH binding site. Position 281 (E281) interacts with NADPH.

This sequence belongs to the NAD-dependent glycerol-3-phosphate dehydrogenase family.

It localises to the cytoplasm. The enzyme catalyses sn-glycerol 3-phosphate + NAD(+) = dihydroxyacetone phosphate + NADH + H(+). It catalyses the reaction sn-glycerol 3-phosphate + NADP(+) = dihydroxyacetone phosphate + NADPH + H(+). It participates in membrane lipid metabolism; glycerophospholipid metabolism. In terms of biological role, catalyzes the reduction of the glycolytic intermediate dihydroxyacetone phosphate (DHAP) to sn-glycerol 3-phosphate (G3P), the key precursor for phospholipid synthesis. The polypeptide is Glycerol-3-phosphate dehydrogenase [NAD(P)+] (Pseudomonas aeruginosa (strain LESB58)).